A 354-amino-acid chain; its full sequence is Lysophosphatidic acid receptor 3 (354 aa).

The Extracellular portion of the chain corresponds to 1-31 (MNECHYDKRMDFFYNRSNTDTADEWTGTKLV). N-linked (GlcNAc...) asparagine glycosylation occurs at Asn15. Residues 32 to 52 (IVLCVGTFFCLFIFFSNSLVI) form a helical membrane-spanning segment. At 53–67 (AAVITNRKFHFPFYY) the chain is on the cytoplasmic side. A helical transmembrane segment spans residues 68–88 (LLANLAAADFFAGIAYVFLMF). At 89-101 (NTGPVSKTLTVNR) the chain is on the extracellular side. Residues 102–124 (WLLRQGLLDTSLTASLANLLVIA) form a helical membrane-spanning segment. Over 125–146 (VERHMSIMRMRIHSNLTKKRVT) the chain is Cytoplasmic. Residues 147-167 (LLILLVWAIAIFMGAVPTLGW) traverse the membrane as a helical segment. Residues 168-186 (NCLCNISACSSLAPIYSRS) lie on the Extracellular side of the membrane. N-linked (GlcNAc...) asparagine glycosylation occurs at Asn172. Residues 187–207 (YLIFWTVSNLLAFFIMVVVYV) traverse the membrane as a helical segment. The Cytoplasmic portion of the chain corresponds to 208-240 (RIYMYVKRKTNVLSPHTSGSISRRRAPMKLMKT). The chain crosses the membrane as a helical span at residues 241–261 (VMTVLGAFVVCWTPGLVVLLL). Over 262–276 (DGLNCKQCNVQHVKR) the chain is Extracellular. The chain crosses the membrane as a helical span at residues 277 to 295 (WFLLLALLNSVMNPIIYSY). Over 296–354 (KDEDMYNTMRKMICCAPHDSNAERHPSRIPSTIHSRSDTGSQYLEDSISQGQVCNKSSS) the chain is Cytoplasmic. Residue Cys309 is the site of S-palmitoyl cysteine attachment.

Belongs to the G-protein coupled receptor 1 family.

The protein resides in the cell membrane. Receptor for lysophosphatidic acid (LPA), a mediator of diverse cellular activities. Seems to be coupled to the G(i)/G(o) and G(q) families of heteromeric G proteins. This chain is Lysophosphatidic acid receptor 3 (Lpar3), found in Rattus norvegicus (Rat).